Reading from the N-terminus, the 87-residue chain is Conotoxin Cl12.3 (87 aa).

Positions 1-19 (MKLTCVLVVLLLFLPYGDL) are cleaved as a signal peptide. Residues 20-42 (ITNNYIGGAARKVTPWRRNLKTR) constitute a propeptide that is removed on maturation.

This sequence belongs to the conotoxin O1 superfamily. Contains 4 disulfide bonds. Expressed by the venom duct.

It localises to the secreted. The sequence is that of Conotoxin Cl12.3 from Californiconus californicus (California cone).